The sequence spans 435 residues: Methylenetetrahydrofolate--tRNA-(uracil-5-)-methyltransferase TrmFO (435 aa).

An FAD-binding site is contributed by 9-14 (GAGLAG).

Belongs to the MnmG family. TrmFO subfamily. FAD serves as cofactor.

The protein resides in the cytoplasm. The catalysed reaction is uridine(54) in tRNA + (6R)-5,10-methylene-5,6,7,8-tetrahydrofolate + NADH + H(+) = 5-methyluridine(54) in tRNA + (6S)-5,6,7,8-tetrahydrofolate + NAD(+). It catalyses the reaction uridine(54) in tRNA + (6R)-5,10-methylene-5,6,7,8-tetrahydrofolate + NADPH + H(+) = 5-methyluridine(54) in tRNA + (6S)-5,6,7,8-tetrahydrofolate + NADP(+). Functionally, catalyzes the folate-dependent formation of 5-methyl-uridine at position 54 (M-5-U54) in all tRNAs. The protein is Methylenetetrahydrofolate--tRNA-(uracil-5-)-methyltransferase TrmFO of Staphylococcus saprophyticus subsp. saprophyticus (strain ATCC 15305 / DSM 20229 / NCIMB 8711 / NCTC 7292 / S-41).